Consider the following 215-residue polypeptide: Cytochrome b6 (215 aa).

A helical transmembrane segment spans residues 32 to 52; sequence IFYCLGGITLTCFLVQVATGF. Cys35 provides a ligand contact to heme c. His86 and His100 together coordinate heme b. 3 helical membrane-spanning segments follow: residues 90-110, 116-136, and 186-206; these read ASMM…TGGF, LTWV…VTGY, and LHTF…FSMI. 2 residues coordinate heme b: His187 and His202.

The protein belongs to the cytochrome b family. PetB subfamily. As to quaternary structure, the 4 large subunits of the cytochrome b6-f complex are cytochrome b6, subunit IV (17 kDa polypeptide, PetD), cytochrome f and the Rieske protein, while the 4 small subunits are PetG, PetL, PetM and PetN. The complex functions as a dimer. Heme b serves as cofactor. The cofactor is heme c.

It localises to the plastid. It is found in the chloroplast thylakoid membrane. In terms of biological role, component of the cytochrome b6-f complex, which mediates electron transfer between photosystem II (PSII) and photosystem I (PSI), cyclic electron flow around PSI, and state transitions. The protein is Cytochrome b6 of Lotus japonicus (Lotus corniculatus var. japonicus).